We begin with the raw amino-acid sequence, 339 residues long: Large ribosomal subunit protein uL10 (339 aa).

Positions 300 to 339 (AAAQATPSVEEREEEEKPEEEEEEEEKEEEAIEGLGALFG) are disordered. Residues 310–331 (EREEEEKPEEEEEEEEKEEEAI) are compositionally biased toward acidic residues.

It belongs to the universal ribosomal protein uL10 family. In terms of assembly, part of the 50S ribosomal subunit. Forms part of the ribosomal stalk which helps the ribosome interact with GTP-bound translation factors. Forms a heptameric L10(L12)2(L12)2(L12)2 complex, where L10 forms an elongated spine to which the L12 dimers bind in a sequential fashion.

Functionally, forms part of the ribosomal stalk, playing a central role in the interaction of the ribosome with GTP-bound translation factors. The sequence is that of Large ribosomal subunit protein uL10 from Archaeoglobus fulgidus (strain ATCC 49558 / DSM 4304 / JCM 9628 / NBRC 100126 / VC-16).